The sequence spans 382 residues: U11/U12 small nuclear ribonucleoprotein 59 kDa protein (382 aa).

A coiled-coil region spans residues 31 to 63 (NTKNITDQLKQLQDTLNLAKSMEKELEALKMIK). The segment at 274 to 297 (SEENTTLTTSNKTNNDTDKDSNTN) is disordered. Positions 277-287 (NTTLTTSNKTN) are enriched in low complexity.

Component of the U11/U12 snRNPs that are part of the U12-type spliceosome.

The protein resides in the nucleus. This Arabidopsis thaliana (Mouse-ear cress) protein is U11/U12 small nuclear ribonucleoprotein 59 kDa protein (SNRNP59).